A 631-amino-acid chain; its full sequence is tRNA uridine 5-carboxymethylaminomethyl modification enzyme MnmG (631 aa).

FAD-binding positions include 15 to 20 (GGGHAG), valine 127, and serine 182. Position 275–289 (275–289 (GPRYCPSIEDKIVRF)) interacts with NAD(+). Glutamine 372 is an FAD binding site.

Belongs to the MnmG family. In terms of assembly, homodimer. Heterotetramer of two MnmE and two MnmG subunits. It depends on FAD as a cofactor.

The protein resides in the cytoplasm. NAD-binding protein involved in the addition of a carboxymethylaminomethyl (cmnm) group at the wobble position (U34) of certain tRNAs, forming tRNA-cmnm(5)s(2)U34. The sequence is that of tRNA uridine 5-carboxymethylaminomethyl modification enzyme MnmG from Buchnera aphidicola subsp. Schizaphis graminum (strain Sg).